A 169-amino-acid polypeptide reads, in one-letter code: Crossover junction endodeoxyribonuclease RuvC (169 aa).

Catalysis depends on residues Asp11, Glu71, and Asp143. 3 residues coordinate Mg(2+): Asp11, Glu71, and Asp143.

Belongs to the RuvC family. As to quaternary structure, homodimer which binds Holliday junction (HJ) DNA. The HJ becomes 2-fold symmetrical on binding to RuvC with unstacked arms; it has a different conformation from HJ DNA in complex with RuvA. In the full resolvosome a probable DNA-RuvA(4)-RuvB(12)-RuvC(2) complex forms which resolves the HJ. Mg(2+) serves as cofactor.

The protein localises to the cytoplasm. The catalysed reaction is Endonucleolytic cleavage at a junction such as a reciprocal single-stranded crossover between two homologous DNA duplexes (Holliday junction).. The RuvA-RuvB-RuvC complex processes Holliday junction (HJ) DNA during genetic recombination and DNA repair. Endonuclease that resolves HJ intermediates. Cleaves cruciform DNA by making single-stranded nicks across the HJ at symmetrical positions within the homologous arms, yielding a 5'-phosphate and a 3'-hydroxyl group; requires a central core of homology in the junction. The consensus cleavage sequence is 5'-(A/T)TT(C/G)-3'. Cleavage occurs on the 3'-side of the TT dinucleotide at the point of strand exchange. HJ branch migration catalyzed by RuvA-RuvB allows RuvC to scan DNA until it finds its consensus sequence, where it cleaves and resolves the cruciform DNA. This is Crossover junction endodeoxyribonuclease RuvC from Rhizobium etli (strain ATCC 51251 / DSM 11541 / JCM 21823 / NBRC 15573 / CFN 42).